Here is a 199-residue protein sequence, read N- to C-terminus: Recombination protein RecR (199 aa).

A C4-type zinc finger spans residues 58–73 (CKKCFNLTSEDECEIC). The Toprim domain occupies 81–175 (KLICVVAETK…KVTRIAYGLP (95 aa)).

This sequence belongs to the RecR family.

Functionally, may play a role in DNA repair. It seems to be involved in an RecBC-independent recombinational process of DNA repair. It may act with RecF and RecO. The sequence is that of Recombination protein RecR from Prochlorococcus marinus (strain MIT 9301).